The sequence spans 396 residues: 8-amino-7-oxononanoate synthase (396 aa).

Arg-19 contributes to the substrate binding site. Position 106 to 107 (106 to 107 (GY)) interacts with pyridoxal 5'-phosphate. Position 131 (His-131) interacts with substrate. Residues Ser-176, His-204, and Thr-233 each coordinate pyridoxal 5'-phosphate. Lys-236 bears the N6-(pyridoxal phosphate)lysine mark. Thr-350 contributes to the substrate binding site.

Belongs to the class-II pyridoxal-phosphate-dependent aminotransferase family. BioF subfamily. In terms of assembly, homodimer. Pyridoxal 5'-phosphate serves as cofactor.

It catalyses the reaction 6-carboxyhexanoyl-[ACP] + L-alanine + H(+) = (8S)-8-amino-7-oxononanoate + holo-[ACP] + CO2. It functions in the pathway cofactor biosynthesis; biotin biosynthesis. Functionally, catalyzes the decarboxylative condensation of pimeloyl-[acyl-carrier protein] and L-alanine to produce 8-amino-7-oxononanoate (AON), [acyl-carrier protein], and carbon dioxide. This is 8-amino-7-oxononanoate synthase from Pseudomonas syringae pv. tomato (strain ATCC BAA-871 / DC3000).